Consider the following 360-residue polypeptide: Membrane-bound lytic murein transglycosylase C (360 aa).

Positions 1–16 (MKKIFALALIAPLLIS) are cleaved as a signal peptide. A lipid anchor (N-palmitoyl cysteine) is attached at cysteine 17. A lipid anchor (S-diacylglycerol cysteine) is attached at cysteine 17.

The protein belongs to the transglycosylase Slt family.

It is found in the cell outer membrane. The enzyme catalyses Exolytic cleavage of the (1-&gt;4)-beta-glycosidic linkage between N-acetylmuramic acid (MurNAc) and N-acetylglucosamine (GlcNAc) residues in peptidoglycan, from either the reducing or the non-reducing ends of the peptidoglycan chains, with concomitant formation of a 1,6-anhydrobond in the MurNAc residue.. Functionally, murein-degrading enzyme. May play a role in recycling of muropeptides during cell elongation and/or cell division. This is Membrane-bound lytic murein transglycosylase C from Cronobacter sakazakii (strain ATCC BAA-894) (Enterobacter sakazakii).